We begin with the raw amino-acid sequence, 350 residues long: Geranylgeranyl pyrophosphate synthase (350 aa).

The isopentenyl diphosphate site is built by K66, R69, and H98. Residues D105 and D109 each coordinate Mg(2+). R114 contacts dimethylallyl diphosphate. R115 is a binding site for isopentenyl diphosphate. Dimethylallyl diphosphate is bound by residues K200, T201, Q236, N243, and K263.

The protein belongs to the FPP/GGPP synthase family. Mg(2+) is required as a cofactor.

It catalyses the reaction isopentenyl diphosphate + dimethylallyl diphosphate = (2E)-geranyl diphosphate + diphosphate. The catalysed reaction is isopentenyl diphosphate + (2E)-geranyl diphosphate = (2E,6E)-farnesyl diphosphate + diphosphate. It carries out the reaction isopentenyl diphosphate + (2E,6E)-farnesyl diphosphate = (2E,6E,10E)-geranylgeranyl diphosphate + diphosphate. The protein operates within secondary metabolite biosynthesis; terpenoid biosynthesis. In terms of biological role, geranylgeranyl pyrophosphate synthase; part of the gene cluster that mediates the biosynthesis of pleuromutilin, a tricyclic diterpene showing antibacterial properties. The geranylgeranyl diphosphate (GGPP) synthase catalyzes the first step in pleuromutilin biosynthesis. GGPP is then substrate of the premutilin synthase (PS) to yield premutilin. Premutilin synthase is a bifunctional enzyme composed of the fusion of a class II diterpene cyclase (DTC) and a class I diterpene synthase (DTS), with the corresponding domains and active sites containing characteristic aspartate-rich motifs. GGPP is first converted to mutildienyl-diphosphate (MPP) at the class II DTC site. MPP is subsequently further cyclized at the class I DTS site, followed by a 1,5-hydride shift and addition of water prior to terminating deprotonation, to yield premutilin. In addition to the aforementioned GGPP synthase and bifunctional diterpene synthase, the cluster also contains three cytochrome P450 monooxygenases, a short-chain alcohol dehydrogenase, and an acyltransferase, involved in the conversion of premutilin to pleuromutilin. The cytochrome P450 monooxygenases P450-1 and P450-2 hydroxylate premutilin at C-11 and C-3, respectively, producing 11-hydroxypremutilin and 3-hydroxypremutilin. The combination of the actions of both ple5 and ple6 leads to the production of 3,11-dihydroxypremutilin. The short chain dehydrogenase SDR further converts 3,11-dihydroxypremutilin into mutilin. The acetyltransferase ATF then acetylates mutilin to produce 14-O-acetylmutilin. Finally, the cytochrome P450 monooxygenase P450-3 catalyzes hydroxylation on the alpha position of the acetyl side chain of 14-O-acetylmutilin to yield pleuromutilin. The chain is Geranylgeranyl pyrophosphate synthase from Clitopilus passeckerianus (Pleurotus passeckerianus).